A 485-amino-acid polypeptide reads, in one-letter code: Glutamyl-tRNA(Gln) amidotransferase subunit A (485 aa).

Catalysis depends on charge relay system residues Lys-79 and Ser-154. Residue Ser-178 is the Acyl-ester intermediate of the active site.

Belongs to the amidase family. GatA subfamily. Heterotrimer of A, B and C subunits.

The enzyme catalyses L-glutamyl-tRNA(Gln) + L-glutamine + ATP + H2O = L-glutaminyl-tRNA(Gln) + L-glutamate + ADP + phosphate + H(+). Allows the formation of correctly charged Gln-tRNA(Gln) through the transamidation of misacylated Glu-tRNA(Gln) in organisms which lack glutaminyl-tRNA synthetase. The reaction takes place in the presence of glutamine and ATP through an activated gamma-phospho-Glu-tRNA(Gln). This chain is Glutamyl-tRNA(Gln) amidotransferase subunit A, found in Bacillus pumilus (strain SAFR-032).